Reading from the N-terminus, the 330-residue chain is Ferredoxin--NADP reductase (330 aa).

7 residues coordinate FAD: E35, Q43, Y48, V90, F123, D285, and T326.

This sequence belongs to the ferredoxin--NADP reductase type 2 family. In terms of assembly, homodimer. The cofactor is FAD.

It catalyses the reaction 2 reduced [2Fe-2S]-[ferredoxin] + NADP(+) + H(+) = 2 oxidized [2Fe-2S]-[ferredoxin] + NADPH. This chain is Ferredoxin--NADP reductase, found in Streptococcus pyogenes serotype M3 (strain ATCC BAA-595 / MGAS315).